Consider the following 370-residue polypeptide: 3 beta-hydroxysteroid dehydrogenase/Delta 5--&gt;4-isomerase (370 aa).

The Proton acceptor role is filled by tyrosine 158. Lysine 162 lines the NAD(+) pocket.

It belongs to the 3-beta-HSD family. As to quaternary structure, monomer.

It localises to the cytoplasm. It catalyses the reaction a 3beta-hydroxy-Delta(5)-steroid + NAD(+) = a 3-oxo-Delta(5)-steroid + NADH + H(+). It carries out the reaction cholesterol + NAD(+) = cholest-5-en-3-one + NADH + H(+). The enzyme catalyses pregnenolone + NAD(+) = pregn-5-ene-3,20-dione + NADH + H(+). The catalysed reaction is 3beta-hydroxyandrost-5-en-17-one + NAD(+) = androst-5-ene-3,17-dione + NADH + H(+). It catalyses the reaction a 3-oxo-Delta(5)-steroid = a 3-oxo-Delta(4)-steroid. It carries out the reaction cholest-5-en-3-one = cholest-4-en-3-one. The enzyme catalyses pregn-5-ene-3,20-dione = progesterone. The catalysed reaction is androst-5-ene-3,17-dione = androst-4-ene-3,17-dione. It participates in lipid metabolism; steroid biosynthesis. Functionally, 3-beta-HSD is a bifunctional enzyme, that catalyzes the oxidation and isomerization of cholesterol, pregnenolone, and dehydroepiandrosterone (DHEA) into cholest-4-en-3-one, progesterone, and androsterone, respectively. The sequence is that of 3 beta-hydroxysteroid dehydrogenase/Delta 5--&gt;4-isomerase from Mycobacterium tuberculosis (strain CDC 1551 / Oshkosh).